We begin with the raw amino-acid sequence, 150 residues long: Large ribosomal subunit protein bL9 (150 aa).

This sequence belongs to the bacterial ribosomal protein bL9 family.

Its function is as follows. Binds to the 23S rRNA. This Photobacterium profundum (strain SS9) protein is Large ribosomal subunit protein bL9.